A 421-amino-acid polypeptide reads, in one-letter code: Cell division protein FtsA (421 aa).

The protein belongs to the FtsA/MreB family. Self-interacts. Interacts with FtsZ.

Its subcellular location is the cell membrane. Its function is as follows. Cell division protein that is involved in the assembly of the Z ring. May serve as a membrane anchor for the Z ring. In Buchnera aphidicola subsp. Baizongia pistaciae (strain Bp), this protein is Cell division protein FtsA.